Consider the following 150-residue polypeptide: Large ribosomal subunit protein uL13 (150 aa).

This sequence belongs to the universal ribosomal protein uL13 family. As to quaternary structure, part of the 50S ribosomal subunit.

This protein is one of the early assembly proteins of the 50S ribosomal subunit, although it is not seen to bind rRNA by itself. It is important during the early stages of 50S assembly. The protein is Large ribosomal subunit protein uL13 of Chlamydia caviae (strain ATCC VR-813 / DSM 19441 / 03DC25 / GPIC) (Chlamydophila caviae).